We begin with the raw amino-acid sequence, 289 residues long: DDRGK domain-containing protein 1 (289 aa).

Residues 1–2 lie on the Lumenal side of the membrane; it reads MD. Residues 3-23 form a helical membrane-spanning segment; sequence PFILAAIISGIVIIILSIAFL. At 24-289 the chain is on the cytoplasmic side; the sequence is RVSQVKPQAA…LINLAPVTVP (266 aa). The segment at 65 to 168 is disordered; the sequence is RHQAALEEEP…DERKKREQEE (104 aa). The segment covering 70–85 has biased composition (acidic residues); sequence LEEEPEIQEEADEGAP. Over residues 87-166 the composition is skewed to basic and acidic residues; it reads IDQKIDFDDK…AEDERKKREQ (80 aa).

The protein belongs to the DDRGK1 family. Interacts with Atg9; the interaction is transient.

It is found in the endoplasmic reticulum membrane. Substrate adapter for ufmylation, the covalent attachment of the ubiquitin-like modifier UFM1 to substrate proteins. Required for ufmylation of Atg9; protects the nervous system during aging, possibly by stabilizing Atg9 and supporting its function. The chain is DDRGK domain-containing protein 1 from Bombyx mori (Silk moth).